The sequence spans 191 residues: Pyridoxal 5'-phosphate synthase subunit PdxT (191 aa).

46–48 (GES) is an L-glutamine binding site. The active-site Nucleophile is cysteine 78. L-glutamine contacts are provided by residues arginine 105 and 134 to 135 (IR). Catalysis depends on charge relay system residues histidine 170 and glutamate 172.

It belongs to the glutaminase PdxT/SNO family. In the presence of PdxS, forms a dodecamer of heterodimers. Only shows activity in the heterodimer.

The enzyme catalyses aldehydo-D-ribose 5-phosphate + D-glyceraldehyde 3-phosphate + L-glutamine = pyridoxal 5'-phosphate + L-glutamate + phosphate + 3 H2O + H(+). It carries out the reaction L-glutamine + H2O = L-glutamate + NH4(+). Its pathway is cofactor biosynthesis; pyridoxal 5'-phosphate biosynthesis. Catalyzes the hydrolysis of glutamine to glutamate and ammonia as part of the biosynthesis of pyridoxal 5'-phosphate. The resulting ammonia molecule is channeled to the active site of PdxS. In Carboxydothermus hydrogenoformans (strain ATCC BAA-161 / DSM 6008 / Z-2901), this protein is Pyridoxal 5'-phosphate synthase subunit PdxT.